Consider the following 172-residue polypeptide: Ribosome maturation factor RimM (172 aa).

One can recognise a PRC barrel domain in the interval 96–170 (EENEFYFHEI…KITIEVMEGL (75 aa)).

This sequence belongs to the RimM family. Binds ribosomal protein uS19.

It is found in the cytoplasm. Its function is as follows. An accessory protein needed during the final step in the assembly of 30S ribosomal subunit, possibly for assembly of the head region. Essential for efficient processing of 16S rRNA. May be needed both before and after RbfA during the maturation of 16S rRNA. It has affinity for free ribosomal 30S subunits but not for 70S ribosomes. This is Ribosome maturation factor RimM from Listeria monocytogenes serotype 4b (strain CLIP80459).